The chain runs to 283 residues: Thymidylate synthase (283 aa).

Arg22 lines the dUMP pocket. The active-site Nucleophile is the Cys160. DUMP is bound by residues 180–183 (RSCD), Asn191, and 221–223 (HIY). Asp183 provides a ligand contact to (6R)-5,10-methylene-5,6,7,8-tetrahydrofolate. Ser282 contributes to the (6R)-5,10-methylene-5,6,7,8-tetrahydrofolate binding site.

The protein belongs to the thymidylate synthase family. Bacterial-type ThyA subfamily. As to quaternary structure, homodimer.

It is found in the cytoplasm. The catalysed reaction is dUMP + (6R)-5,10-methylene-5,6,7,8-tetrahydrofolate = 7,8-dihydrofolate + dTMP. It functions in the pathway pyrimidine metabolism; dTTP biosynthesis. Its function is as follows. Catalyzes the reductive methylation of 2'-deoxyuridine-5'-monophosphate (dUMP) to 2'-deoxythymidine-5'-monophosphate (dTMP) while utilizing 5,10-methylenetetrahydrofolate (mTHF) as the methyl donor and reductant in the reaction, yielding dihydrofolate (DHF) as a by-product. This enzymatic reaction provides an intracellular de novo source of dTMP, an essential precursor for DNA biosynthesis. The sequence is that of Thymidylate synthase from Haemophilus influenzae (strain PittEE).